We begin with the raw amino-acid sequence, 509 residues long: Ribonuclease Y (509 aa).

The helical transmembrane segment at Ile-3 to Gly-23 threads the bilayer. The region spanning Thr-197–Leu-257 is the KH domain. An HD domain is found at Val-323–Ser-418.

Belongs to the RNase Y family.

The protein resides in the cell membrane. Its function is as follows. Endoribonuclease that initiates mRNA decay. This is Ribonuclease Y from Borreliella afzelii (strain PKo) (Borrelia afzelii).